Reading from the N-terminus, the 478-residue chain is MVTTTAKNVGYITQIIGPVVDAEFPEGDLPAIYNALLIEGKTDSGLDIRLTCEVQQLLGDKKVRAVSMSTTDGMVRGMKAIDTGAPITVPVGKSTLGRIFNVLGEPIDELGPVEIVDKFSIHRSAPKFTDLVTQPEIFETGIKVIDLLAPYRKGGKIGLFGGAGVGKTVLIQELIHNIAKEHSGVSVFGGVGERTREGNDLYNEFKESNVLGQVALVYGQMNEPPGARMRVGLTALTMAEYFRDVSKQDVLLFIDNIFRFVQAGSEVSALLGRMPSAVGYQPTLGTEMGDLQERITSTNEGSITSVQAVYVPADDLTDPAPATTFAHLDATTVLSRQLASLGIYPAVDPLSSTSTMLQPAVVGEEHYNIARGVQSTLQRYKDLQDIIAILGLDELSPEDKLVVNRARKLQRFLSQPFHVAEIFTGSPGKYVSLDKTIAGFKRVLQGEFDDLPEQAFYLVGDLDEALEKAKKLKDEGKS.

161–168 (GGAGVGKT) is a binding site for ATP.

This sequence belongs to the ATPase alpha/beta chains family. F-type ATPases have 2 components, CF(1) - the catalytic core - and CF(0) - the membrane proton channel. CF(1) has five subunits: alpha(3), beta(3), gamma(1), delta(1), epsilon(1). CF(0) has four main subunits: a(1), b(1), b'(1) and c(9-12).

The protein resides in the cell inner membrane. It catalyses the reaction ATP + H2O + 4 H(+)(in) = ADP + phosphate + 5 H(+)(out). Produces ATP from ADP in the presence of a proton gradient across the membrane. The catalytic sites are hosted primarily by the beta subunits. The protein is ATP synthase subunit beta of Gloeobacter violaceus (strain ATCC 29082 / PCC 7421).